The primary structure comprises 736 residues: Myotubularin-related protein 12 (736 aa).

Residues 182–558 enclose the Myotubularin phosphatase domain; that stretch reads YLRSTNPEML…RQLSLPSSAF (377 aa). The tract at residues 672–691 is disordered; it reads SLATQPDHPPPLHHRLPSFG.

It belongs to the protein-tyrosine phosphatase family. Non-receptor class myotubularin subfamily. As to quaternary structure, heterodimer with lipid phosphatase mtm1. In skeletal muscles, the interaction stabilizes both mtmr12 and mtm1 protein levels.

The protein localises to the cytoplasm. It localises to the sarcoplasmic reticulum. The protein resides in the myofibril. Its subcellular location is the sarcomere. Functionally, acts as an adapter for the myotubularin phosphatase mtm1 to regulate mtm1 protein stability and possibly its intracellular location. By stabilizing mtm1 protein levels, required for skeletal muscle maintenance but not for myogenesis. In skeletal muscle cells, does not regulate mtm1 subcellular localization. The polypeptide is Myotubularin-related protein 12 (mtmr12) (Danio rerio (Zebrafish)).